Consider the following 1056-residue polypeptide: Potassium transporter TRK1 (1056 aa).

Over 1-46 the chain is Cytoplasmic; that stretch reads MLYRVSGFYKRHTRNFTNIDYGYYIRNFIHHIASKIYPYAKVVLPN. A helical membrane pass occupies residues 47–67; it reads FRAAHYFYILTLVILGSILVY. The Extracellular segment spans residues 68-73; it reads PVKTCA. The stretch at 74-90 is an intramembrane region; that stretch reads YIDVLFFTAGASTQAGL. Residues 91-99 are Extracellular-facing; that stretch reads NTVNVNDLS. The chain crosses the membrane as a helical span at residues 100-122; the sequence is LYQQIVLYLLATLATPIFIHGSL. The Cytoplasmic portion of the chain corresponds to 123-622; that stretch reads LFVRLYYFER…LGGIEYRAVK (500 aa). 3 disordered regions span residues 180-276, 290-350, and 404-571; these read REAE…IDPE, KNQE…EDED, and PWTS…SIEN. A compositionally biased stretch (low complexity) spans 186 to 203; the sequence is SSSSPQSSSSQTSQPVST. A compositionally biased stretch (basic and acidic residues) spans 236–245; it reads EKIHFEEPQR. Polar residues predominate over residues 335 to 344; the sequence is PATNSVGTGN. Positions 412-423 are enriched in low complexity; that stretch reads TLSNSSKKGSLS. 2 stretches are compositionally biased toward acidic residues: residues 428 to 449 and 469 to 487; these read DTEDDSEDEEYASIDSETSDIS and YEEDEDEDEHNSDDDDDGE. The span at 521–533 shows a compositional bias: polar residues; the sequence is RSNTLDTPQQNTS. The segment covering 537 to 549 has biased composition (basic residues); the sequence is KIRKKAPKRKTPR. Positions 553-563 are enriched in polar residues; it reads NASFNQHSNVS. A helical membrane pass occupies residues 623–646; it reads LLIKIIVVYYVGFNIIPGVMLSIW. Over 647–665 the chain is Extracellular; sequence IYCMPHYKNLMISSSISPA. An intramembrane segment occupies 666–682; it reads WWAFFTSQSSFNDLGLT. Over 683 to 693 the chain is Extracellular; it reads LTSNSMMSFNQ. A helical membrane pass occupies residues 694-710; sequence NAFVQILCSFLIVIGNT. Over 711 to 754 the chain is Cytoplasmic; the sequence is GFPILLRFIIWVMFKTARPLSLYKESLGFLLDHPRRCFTLLFPS. Residues 755 to 778 traverse the membrane as a helical segment; sequence VPTWWLFFILVVLNGFDLVIFCIL. Residues 779 to 793 lie on the Extracellular side of the membrane; the sequence is DLHDDTFKGVDMGYR. The stretch at 794–810 is an intramembrane region; it reads VLNGLFQAFCTRTVGFS. The Extracellular portion of the chain corresponds to 811 to 817; it reads VMDLSQL. Residues 818–841 traverse the membrane as a helical segment; it reads HAATQVSYLIMMYISVLPIAISVR. Over 842–874 the chain is Cytoplasmic; sequence RTNVYEEQSLGVYAKENAEGVDESAPSNYVGSH. The chain crosses the membrane as a helical span at residues 875–896; that stretch reads LRNQLSYDLWYICLGLFIICIA. The Extracellular portion of the chain corresponds to 897–909; the sequence is EGKRLKEQDLRFS. The stretch at 910 to 928 is an intramembrane region; sequence IFAVLFEIVSAYGTVGMSM. Topologically, residues 929–942 are extracellular; the sequence is GYPGVDCSLSGEFN. The chain crosses the membrane as a helical span at residues 943-965; that stretch reads VISKLVIIAMMIRGRHRGLPYTI. The Cytoplasmic portion of the chain corresponds to 966–1056; it reads DRAIMLPNAA…RYVVRTVSEV (91 aa).

The protein belongs to the TrkH potassium transport family.

It is found in the cell membrane. The catalysed reaction is K(+)(in) = K(+)(out). It catalyses the reaction chloride(in) = chloride(out). Its activity is regulated as follows. TRK1-mediated chloride conductance is blocked by 4,4'-diisothiocyanatostilbene-2,2'-disulfonic acid. In terms of biological role, potassium transporter that mediates K(+) influx, as well as Cl(-) efflux as a secondary function. TRK1 is the major K(+) uptake transporter that regulates membrane potential and intracellular pH. The TRK1-mediated Cl(-) efflux should serve as a Cl(-) detoxification route and may play a role in sustaining C.albicans on mammalian epithelial surfaces, or in physiological saline solutions such as saliva. Mediates candidacidal activities of cysteine-free peptides, but not of defensins. The hallmark of salivary gland-secreted histatin-5 (Hst 5) killing of C.albicans is the rapid efflux of cellular ATP and other small nucleotides and ions from the cell as well as concurrent intracellular uptake of propidium iodide (PI). TRK1 is the channel for Hst 5-induced killing and histatin-5 may directly or indirectly alter TRK1 function, allowing the efflux of larger anions, including ATP, and the influx of small cationic dyes, such as PI. This is Potassium transporter TRK1 from Candida albicans (strain SC5314 / ATCC MYA-2876) (Yeast).